The sequence spans 135 residues: Large ribosomal subunit protein eL32 (135 aa).

Residue Lys9 forms a Glycyl lysine isopeptide (Lys-Gly) (interchain with G-Cter in SUMO2) linkage. Residue Lys50 is modified to N6-succinyllysine. Residue Ser62 is modified to Phosphoserine.

It belongs to the eukaryotic ribosomal protein eL32 family. Component of the large ribosomal subunit.

It localises to the cytoplasm. Functionally, component of the large ribosomal subunit. The ribosome is a large ribonucleoprotein complex responsible for the synthesis of proteins in the cell. The polypeptide is Large ribosomal subunit protein eL32 (RPL32) (Macaca fascicularis (Crab-eating macaque)).